A 1058-amino-acid chain; its full sequence is Zinc finger protein 865 (1058 aa).

Disordered regions lie at residues 1–24 (MEANQAGSGAGGGGSSGIGGEDGV), 58–134 (LPCT…PPLF), and 156–201 (GNLK…ACDP). The segment covering 8 to 21 (SGAGGGGSSGIGGE) has biased composition (gly residues). Residues 61 to 78 (TPGPPPQPPPQPPPPQYD) are compositionally biased toward pro residues. Positions 93–113 (SSSSSSSSSSSSSSSSSSSSS) are enriched in low complexity. Positions 120-133 (PPLPPTFGAPPPPL) are enriched in pro residues. Residues 172–187 (GLGTPTGTPGPLTTPS) show a composition bias toward low complexity. 2 consecutive C2H2-type zinc fingers follow at residues 220–242 (FPCGVCQKSFKQSSHLVQHMLVH) and 248–270 (YECGICGRTYNHVSSLIRHRRCH). A disordered region spans residues 269–342 (CHKDVPPTPT…PPGVAMPPSA (74 aa)). A compositionally biased stretch (low complexity) spans 294–324 (PVSTASATASSDPAAVSSGPSATPATPATST). 9 C2H2-type zinc fingers span residues 350–372 (FACSLCWKVFKKPSHLHQHQIIH), 378–400 (FSCSVCSKSFNRRESLKRHVKTH), 407–429 (LPCGICGKVFRDASYLLKHQAAH), 439–461 (YPCDLCGKTYSAPQSLLRHKAAH), 546–568 (FCCGICGRAFGRRETLKRHERIH), 574–596 (HQCPVCGKRFRESFHLSKHHVVH), 602–624 (YKCELCGKVFGYPQSLTRHRQVH), 664–686 (YACSDCGEHFPDLFHVMSHKEAH), and 692–714 (YGCDACGKTFGFIENLMWHKLVH). The interval 459–486 (AAHAPPVATEPAKDGAASVPQPPPPFPP) is disordered. A disordered region spans residues 721 to 743 (LLAPTPSGPQSSDGGSSGGGTDA). 9 consecutive C2H2-type zinc fingers follow at residues 791–813 (FSCATCGQSFKHFLGLVTHKYVH), 819–841 (LGCGLCGQSFAGAYDLLLHRRSH), 847–869 (FRCPVCGKRFWEAALLMRHQRCH), 875–897 (YRCGVCGRGFLRSWYLRQHRVVH), 903–925 (FKCGVCAKHFAQSSSLAEHRRLH), 931–953 (QRCGACGKTFRYRSNLLEHQRLH), 959–981 (YRCEHCGKGFFYLSSVLRHQRAH), 988–1010 (LRCPACLKAFKDPGYFRKHLAAH), and 1016–1038 (FRCSSCGEGFANTYGLKKHRLMH). Lys801 is covalently cross-linked (Glycyl lysine isopeptide (Lys-Gly) (interchain with G-Cter in SUMO2)). Lys1039 participates in a covalent cross-link: Glycyl lysine isopeptide (Lys-Gly) (interchain with G-Cter in SUMO2).

This sequence belongs to the krueppel C2H2-type zinc-finger protein family.

It is found in the nucleus. In terms of biological role, may be involved in transcriptional regulation. In Mus musculus (Mouse), this protein is Zinc finger protein 865 (Znf865).